Consider the following 404-residue polypeptide: Cysteine desulfurase IscS (404 aa).

Residues 75 to 76 (AT), Asn-155, Gln-183, and 203 to 205 (SGH) contribute to the pyridoxal 5'-phosphate site. Lys-206 is subject to N6-(pyridoxal phosphate)lysine. Thr-243 is a pyridoxal 5'-phosphate binding site. The Cysteine persulfide intermediate role is filled by Cys-328. Cys-328 serves as a coordination point for [2Fe-2S] cluster.

The protein belongs to the class-V pyridoxal-phosphate-dependent aminotransferase family. NifS/IscS subfamily. In terms of assembly, homodimer. Forms a heterotetramer with IscU, interacts with other sulfur acceptors. The cofactor is pyridoxal 5'-phosphate.

It is found in the cytoplasm. The catalysed reaction is (sulfur carrier)-H + L-cysteine = (sulfur carrier)-SH + L-alanine. Its pathway is cofactor biosynthesis; iron-sulfur cluster biosynthesis. Functionally, master enzyme that delivers sulfur to a number of partners involved in Fe-S cluster assembly, tRNA modification or cofactor biosynthesis. Catalyzes the removal of elemental sulfur atoms from cysteine to produce alanine. Functions as a sulfur delivery protein for Fe-S cluster synthesis onto IscU, an Fe-S scaffold assembly protein, as well as other S acceptor proteins. This is Cysteine desulfurase IscS from Pectobacterium atrosepticum (strain SCRI 1043 / ATCC BAA-672) (Erwinia carotovora subsp. atroseptica).